A 201-amino-acid polypeptide reads, in one-letter code: MNPEYDYLFKLLLIGDSGVGKSCLLLRFADDTYTESYISTIGVDFKIRTIELDGKTIKLQIWDTAGQERFRTITSSYYRGAHGIIVVYDVTDQESYANVKQWLQEIDRYASENVNKLLVGNKSDLTTKKVVDNTTAKEFADSLGVPFLETSAKNATNVEQAFMTMAAEIKKRMGPGAASGGERPNLKIDSTPVKPASGGCC.

Met1 carries the post-translational modification N-acetylmethionine. The GTP site is built by Ser17, Gly18, Val19, Gly20, Lys21, Ser22, Cys23, Tyr33, Thr34, Glu35, Ser36, Ser39, and Thr40. Ser22 is a binding site for Mg(2+). The Switch 1 motif lies at 30–45 (DDTYTESYISTIGVDF). Mg(2+) is bound by residues Thr40 and Asp63. A switch 2 region; required for interaction with REP1/CHM region spans residues 64 to 83 (TAGQERFRTITSSYYRGAHG). The short motif at 65 to 80 (AGQERFRTITSSYYRG) is the Switch 2 element. Positions 66, 121, 122, 124, 151, 152, and 153 each coordinate GTP. A disordered region spans residues 174–201 (GPGAASGGERPNLKIDSTPVKPASGGCC). 2 S-geranylgeranyl cysteine lipidation sites follow: Cys200 and Cys201. Cys201 bears the Cysteine methyl ester mark.

The protein belongs to the small GTPase superfamily. Rab family. In terms of assembly, interacts with MICAL1 and MICAL2. Interacts (GTP-bound form) with MICALCL, MICAL1 and MILCAL3. Interacts with GDI1; the interaction requires the GDP-bound state. Interacts with CHM/REP1; the interaction requires the GDP-bound form and is necessary for prenylation by GGTase II. Interacts with RabGAP TBC1D20. Interacts (in GDP-bound form) with lipid phosphatase MTMR6 (via GRAM domain); the interaction regulates MTMR6 recruitment to the endoplasmic reticulum-Golgi intermediate compartment. Interacts (in GDP-bound form) with lipid phosphatase MTMR7. Requires Mg(2+) as cofactor. Post-translationally, prenylated; by GGTase II, only after interaction of the substrate with Rab escort protein 1 (REP1).

Its subcellular location is the cytoplasm. It is found in the membrane. The protein localises to the preautophagosomal structure membrane. It localises to the perinuclear region. The enzyme catalyses GTP + H2O = GDP + phosphate + H(+). Regulated by guanine nucleotide exchange factors (GEFs) which promote the exchange of bound GDP for free GTP. Regulated by GTPase activating proteins (GAPs) including TBC1D20 which increases the GTP hydrolysis activity. Inhibited by GDP dissociation inhibitors (GDIs). Its function is as follows. The small GTPases Rab are key regulators of intracellular membrane trafficking, from the formation of transport vesicles to their fusion with membranes. Rabs cycle between an inactive GDP-bound form and an active GTP-bound form that is able to recruit to membranes different set of downstream effectors directly responsible for vesicle formation, movement, tethering and fusion. Plays a role in the initial events of the autophagic vacuole development which take place at specialized regions of the endoplasmic reticulum. Regulates vesicular transport between the endoplasmic reticulum and successive Golgi compartments. Required to modulate the compacted morphology of the Golgi. Promotes the recruitment of lipid phosphatase MTMR6 to the endoplasmic reticulum-Golgi intermediate compartment. This Mus musculus (Mouse) protein is Ras-related protein Rab-1B (Rab1b).